Reading from the N-terminus, the 657-residue chain is Threonine--tRNA ligase (657 aa).

A TGS domain is found at 1 to 70 (MSDHKESTGA…NSDAAIEIIT (70 aa)). The segment at 253-555 (DHRKLGAELE…LIEHTAGNFP (303 aa)) is catalytic. Cys-351, His-402, and His-532 together coordinate Zn(2+).

The protein belongs to the class-II aminoacyl-tRNA synthetase family. In terms of assembly, homodimer. Zn(2+) is required as a cofactor.

The protein localises to the cytoplasm. The enzyme catalyses tRNA(Thr) + L-threonine + ATP = L-threonyl-tRNA(Thr) + AMP + diphosphate + H(+). Functionally, catalyzes the attachment of threonine to tRNA(Thr) in a two-step reaction: L-threonine is first activated by ATP to form Thr-AMP and then transferred to the acceptor end of tRNA(Thr). Also edits incorrectly charged L-seryl-tRNA(Thr). In Chlorobium chlorochromatii (strain CaD3), this protein is Threonine--tRNA ligase.